Reading from the N-terminus, the 143-residue chain is Transcriptional regulatory protein RosR (143 aa).

The C2H3-type zinc-finger motif lies at 79-97 (CLECGGNFKSLKRHLMTHH).

It belongs to the ros/MucR family.

This chain is Transcriptional regulatory protein RosR (rosR), found in Rhizobium etli (strain ATCC 51251 / DSM 11541 / JCM 21823 / NBRC 15573 / CFN 42).